Reading from the N-terminus, the 145-residue chain is Bacilliredoxin BLi02578/BL01507 (145 aa).

Belongs to the bacilliredoxin family.

The polypeptide is Bacilliredoxin BLi02578/BL01507 (Bacillus licheniformis (strain ATCC 14580 / DSM 13 / JCM 2505 / CCUG 7422 / NBRC 12200 / NCIMB 9375 / NCTC 10341 / NRRL NRS-1264 / Gibson 46)).